The following is a 377-amino-acid chain: Mitogen-activated protein kinase HOG1 (377 aa).

The 283-residue stretch at 23–305 (YTELNPVGMG…AVEGLTHPYM (283 aa)) folds into the Protein kinase domain. Residues 29–37 (VGMGAFGLV) and lysine 52 contribute to the ATP site. The active-site Proton acceptor is aspartate 144. A Phosphothreonine modification is found at threonine 174. The short motif at 174–176 (TGY) is the TXY element. Phosphotyrosine is present on tyrosine 176. The segment at 354 to 377 (NETEGSEQPDSQVEQNNLDSANGA) is disordered. The segment covering 359-377 (SEQPDSQVEQNNLDSANGA) has biased composition (polar residues).

Belongs to the protein kinase superfamily. Ser/Thr protein kinase family. MAP kinase subfamily. HOG1 sub-subfamily. Mg(2+) serves as cofactor. In terms of processing, dually phosphorylated on Thr-174 and Tyr-176, which activates the enzyme. Phosphorylated in response to oxidative and salt stress.

Its subcellular location is the cytoplasm. The protein localises to the nucleus. The enzyme catalyses L-seryl-[protein] + ATP = O-phospho-L-seryl-[protein] + ADP + H(+). It catalyses the reaction L-threonyl-[protein] + ATP = O-phospho-L-threonyl-[protein] + ADP + H(+). Its activity is regulated as follows. Activated by tyrosine and threonine phosphorylation. Functionally, proline-directed serine/threonine-protein kinase involved in a signal transduction pathway that is activated by changes in the osmolarity of the extracellular environment. Controls osmotic regulation of transcription of target genes. Regulates stress-induced production and accumulation of glycerol and D-arabitol. HOG1 is also involved in virulence, morphogenesis and oxidative stress response especially through its role in chlamydospore formation, an oxygen-dependent morphogenetic program. The polypeptide is Mitogen-activated protein kinase HOG1 (HOG1) (Candida albicans (strain SC5314 / ATCC MYA-2876) (Yeast)).